Here is a 151-residue protein sequence, read N- to C-terminus: Metallothiol transferase FosB (151 aa).

The 116-residue stretch at 4–119 (SINHVTYSVS…DGHKFELHTG (116 aa)) folds into the VOC domain. 3 residues coordinate Mg(2+): histidine 7, histidine 66, and glutamate 115. Glutamate 115 serves as the catalytic Proton donor/acceptor.

The protein belongs to the fosfomycin resistance protein family. FosB subfamily. Homodimer. The cofactor is Mg(2+).

The protein resides in the cytoplasm. Its function is as follows. Metallothiol transferase which confers resistance to fosfomycin by catalyzing the addition of a thiol cofactor to fosfomycin. L-cysteine is probably the physiological thiol donor. The chain is Metallothiol transferase FosB from Staphylococcus saprophyticus subsp. saprophyticus (strain ATCC 15305 / DSM 20229 / NCIMB 8711 / NCTC 7292 / S-41).